The primary structure comprises 164 residues: Transcription factor E (164 aa).

The 83-residue stretch at 5–87 (NDKVIRGYLR…LWHLDFSDIE (83 aa)) folds into the HTH TFE/IIEalpha-type domain.

It belongs to the TFE family. Monomer. Interaction with RNA polymerase subunits RpoF and RpoE is necessary for Tfe stimulatory transcription activity. Able to interact with Tbp and RNA polymerase in the absence of DNA promoter. Interacts both with the preinitiation and elongation complexes.

Transcription factor that plays a role in the activation of archaeal genes transcribed by RNA polymerase. Facilitates transcription initiation by enhancing TATA-box recognition by TATA-box-binding protein (Tbp), and transcription factor B (Tfb) and RNA polymerase recruitment. Not absolutely required for transcription in vitro, but particularly important in cases where Tbp or Tfb function is not optimal. It dynamically alters the nucleic acid-binding properties of RNA polymerases by stabilizing the initiation complex and destabilizing elongation complexes. Seems to translocate with the RNA polymerase following initiation and acts by binding to the non template strand of the transcription bubble in elongation complexes. This is Transcription factor E from Methanosarcina mazei (strain ATCC BAA-159 / DSM 3647 / Goe1 / Go1 / JCM 11833 / OCM 88) (Methanosarcina frisia).